Here is an 81-residue protein sequence, read N- to C-terminus: Photosystem I iron-sulfur center (81 aa).

4Fe-4S ferredoxin-type domains follow at residues 2 to 31 (SHTV…MIPW) and 39 to 68 (IASS…VRVY). [4Fe-4S] cluster is bound by residues cysteine 11, cysteine 14, cysteine 17, cysteine 21, cysteine 48, cysteine 51, cysteine 54, and cysteine 58.

The eukaryotic PSI reaction center is composed of at least 11 subunits. It depends on [4Fe-4S] cluster as a cofactor.

It localises to the plastid. Its subcellular location is the chloroplast thylakoid membrane. It carries out the reaction reduced [plastocyanin] + hnu + oxidized [2Fe-2S]-[ferredoxin] = oxidized [plastocyanin] + reduced [2Fe-2S]-[ferredoxin]. In terms of biological role, apoprotein for the two 4Fe-4S centers FA and FB of photosystem I (PSI); essential for photochemical activity. FB is the terminal electron acceptor of PSI, donating electrons to ferredoxin. The C-terminus interacts with PsaA/B/D and helps assemble the protein into the PSI complex. Required for binding of PsaD and PsaE to PSI. PSI is a plastocyanin-ferredoxin oxidoreductase, converting photonic excitation into a charge separation, which transfers an electron from the donor P700 chlorophyll pair to the spectroscopically characterized acceptors A0, A1, FX, FA and FB in turn. The protein is Photosystem I iron-sulfur center of Chaetosphaeridium globosum (Charophycean green alga).